Consider the following 481-residue polypeptide: UDP-glycosyltransferase 85A2 (481 aa).

UDP-alpha-D-glucose-binding positions include Ser-303, Cys-360–Gln-362, His-377–Glu-385, and Phe-399–Gln-402.

The protein belongs to the UDP-glycosyltransferase family. As to expression, expressed in roots, shoots, leaves and flowers.

This Arabidopsis thaliana (Mouse-ear cress) protein is UDP-glycosyltransferase 85A2 (UGT85A2).